A 457-amino-acid polypeptide reads, in one-letter code: Methylenetetrahydrofolate--tRNA-(uracil-5-)-methyltransferase TrmFO (457 aa).

12–17 provides a ligand contact to FAD; sequence GGGLAG.

Belongs to the MnmG family. TrmFO subfamily. FAD serves as cofactor.

It is found in the cytoplasm. The enzyme catalyses uridine(54) in tRNA + (6R)-5,10-methylene-5,6,7,8-tetrahydrofolate + NADH + H(+) = 5-methyluridine(54) in tRNA + (6S)-5,6,7,8-tetrahydrofolate + NAD(+). It catalyses the reaction uridine(54) in tRNA + (6R)-5,10-methylene-5,6,7,8-tetrahydrofolate + NADPH + H(+) = 5-methyluridine(54) in tRNA + (6S)-5,6,7,8-tetrahydrofolate + NADP(+). Functionally, catalyzes the folate-dependent formation of 5-methyl-uridine at position 54 (M-5-U54) in all tRNAs. The sequence is that of Methylenetetrahydrofolate--tRNA-(uracil-5-)-methyltransferase TrmFO from Myxococcus xanthus (strain DK1622).